A 904-amino-acid chain; its full sequence is Eukaryotic translation initiation factor 3 subunit C (904 aa).

2 disordered regions span residues 1 to 38 (MSRF…EEED) and 156 to 290 (FRES…TSEK). Residues 22–32 (IQRQTAPQFTF) are compositionally biased toward polar residues. The span at 161 to 183 (DAADDEDEEEEKKEEEESDDEEA) shows a compositional bias: acidic residues. Residues 194–206 (FKKDTVEKVKVEK) are compositionally biased toward basic and acidic residues. The span at 207-232 (DDDDSDDSIDWGQDSDSDESSSEEEA) shows a compositional bias: acidic residues. Residues 237 to 247 (IRERFLKRPEK) are compositionally biased toward basic and acidic residues. Residues 257–272 (KEKKKTKETKDSRKKK) show a composition bias toward basic residues. Residues 636 to 812 (FHMHINLELL…ETVVLHRSEP (177 aa)) form the PCI domain. Residues 847–904 (RGGNQGYNRDRQNYRNQNQNRENWNNNRRQDRGNRNRNQNRDREQREQHRVEFEEKAE) form a disordered region. Low complexity predominate over residues 860-873 (YRNQNQNRENWNNN). Residues 874-904 (RRQDRGNRNRNQNRDREQREQHRVEFEEKAE) show a composition bias toward basic and acidic residues.

Belongs to the eIF-3 subunit C family. In terms of assembly, component of the eukaryotic translation initiation factor 3 (eIF-3) complex.

Its subcellular location is the cytoplasm. Component of the eukaryotic translation initiation factor 3 (eIF-3) complex, which is involved in protein synthesis of a specialized repertoire of mRNAs and, together with other initiation factors, stimulates binding of mRNA and methionyl-tRNAi to the 40S ribosome. The eIF-3 complex specifically targets and initiates translation of a subset of mRNAs involved in cell proliferation. In Culex quinquefasciatus (Southern house mosquito), this protein is Eukaryotic translation initiation factor 3 subunit C.